The chain runs to 267 residues: MPELPEVELTRRRLERELTGKRIDRVVVRTPKLRFPIPQELHVSLPGRTVRSVGRRGKYLLFDCETGWLIVHLGMTGFLRLVAGTAPPGKHDHLDIVFADGTVLRFHDPRKFGTVAWTTDAPATHPLLAAIGPEPLTATFDGAYLFAVTRTRRVAVKQLLMNAAIVAGVGNIYANEALFRAGIRPDRPASSLGRPECERLARTVREVLQESIDQGSTYRVEEETVAYHPLNFDVYGRGTDACTRCGGALEEIRLGNRSTVFCPRCQT.

Pro2 serves as the catalytic Schiff-base intermediate with DNA. Glu3 functions as the Proton donor in the catalytic mechanism. Lys58 functions as the Proton donor; for beta-elimination activity in the catalytic mechanism. DNA contacts are provided by His91, Arg110, and Arg152. The segment at 233–267 (DVYGRGTDACTRCGGALEEIRLGNRSTVFCPRCQT) adopts an FPG-type zinc-finger fold. Arg257 acts as the Proton donor; for delta-elimination activity in catalysis.

This sequence belongs to the FPG family. Monomer. Requires Zn(2+) as cofactor.

The catalysed reaction is Hydrolysis of DNA containing ring-opened 7-methylguanine residues, releasing 2,6-diamino-4-hydroxy-5-(N-methyl)formamidopyrimidine.. It carries out the reaction 2'-deoxyribonucleotide-(2'-deoxyribose 5'-phosphate)-2'-deoxyribonucleotide-DNA = a 3'-end 2'-deoxyribonucleotide-(2,3-dehydro-2,3-deoxyribose 5'-phosphate)-DNA + a 5'-end 5'-phospho-2'-deoxyribonucleoside-DNA + H(+). In terms of biological role, involved in base excision repair of DNA damaged by oxidation or by mutagenic agents. Acts as a DNA glycosylase that recognizes and removes damaged bases. Has a preference for oxidized purines, such as 7,8-dihydro-8-oxoguanine (8-oxoG). Has AP (apurinic/apyrimidinic) lyase activity and introduces nicks in the DNA strand. Cleaves the DNA backbone by beta-delta elimination to generate a single-strand break at the site of the removed base with both 3'- and 5'-phosphates. This is Formamidopyrimidine-DNA glycosylase from Geobacter metallireducens (strain ATCC 53774 / DSM 7210 / GS-15).